The sequence spans 423 residues: Testin (423 aa).

Disordered stretches follow at residues 1-21 (MSAT…ACAS) and 138-169 (EKQP…PSKC). The PET domain maps to 97-204 (MILTNPVAAK…GDVKFPSEMN (108 aa)). Basic and acidic residues predominate over residues 160 to 169 (PAHDQDPSKC). LIM zinc-binding domains are found at residues 236–299 (YSCY…CDSE), 301–361 (PRCA…NHAV), and 364–423 (QGCH…RMMS).

It belongs to the prickle / espinas / testin family. Interacts via LIM domain 1 with ZYX. Interacts (via LIM domain 3) with ENAH and VASP. Interacts with ALKBH4, talin, actin, alpha-actinin, GRIP1 and PXN. Interacts (via LIM domain 2) with ACTL7A (via N-terminus). Heterodimer with ACTL7A; the heterodimer interacts with ENAH to form a heterotrimer. In terms of tissue distribution, detected at the acrosome of round spermatids (at protein level). Isoform TES1 transcript is highly expressed in adult testis and detected at low levels in other tissues. Isoform TES2 transcript is highly expressed in testis, kidney and spleen; intermediate in thymus, submaxillary gland and lung; detected at low levels in other tissues.

The protein resides in the cytoplasm. It is found in the cell junction. It localises to the focal adhesion. Functionally, scaffold protein that may play a role in cell adhesion, cell spreading and in the reorganization of the actin cytoskeleton. Plays a role in the regulation of cell proliferation. May act as a tumor suppressor. The sequence is that of Testin (Tes) from Mus musculus (Mouse).